We begin with the raw amino-acid sequence, 164 residues long: Large ribosomal subunit protein bL19 (164 aa).

A disordered region spans residues 144–164; sequence EAEKQTEVQAEPKIEKSEEKK.

This sequence belongs to the bacterial ribosomal protein bL19 family.

This protein is located at the 30S-50S ribosomal subunit interface and may play a role in the structure and function of the aminoacyl-tRNA binding site. This is Large ribosomal subunit protein bL19 from Pelagibacter ubique (strain HTCC1062).